The primary structure comprises 355 residues: UDP-3-O-acylglucosamine N-acyltransferase (355 aa).

Histidine 258 serves as the catalytic Proton acceptor.

This sequence belongs to the transferase hexapeptide repeat family. LpxD subfamily. Homotrimer.

It carries out the reaction a UDP-3-O-[(3R)-3-hydroxyacyl]-alpha-D-glucosamine + a (3R)-hydroxyacyl-[ACP] = a UDP-2-N,3-O-bis[(3R)-3-hydroxyacyl]-alpha-D-glucosamine + holo-[ACP] + H(+). It participates in bacterial outer membrane biogenesis; LPS lipid A biosynthesis. Its function is as follows. Catalyzes the N-acylation of UDP-3-O-acylglucosamine using 3-hydroxyacyl-ACP as the acyl donor. Is involved in the biosynthesis of lipid A, a phosphorylated glycolipid that anchors the lipopolysaccharide to the outer membrane of the cell. This Agrobacterium fabrum (strain C58 / ATCC 33970) (Agrobacterium tumefaciens (strain C58)) protein is UDP-3-O-acylglucosamine N-acyltransferase.